Consider the following 184-residue polypeptide: UPF0149 protein PSPTO_5224 (184 aa).

It belongs to the UPF0149 family.

This is UPF0149 protein PSPTO_5224 from Pseudomonas syringae pv. tomato (strain ATCC BAA-871 / DC3000).